We begin with the raw amino-acid sequence, 197 residues long: Transcription factor FapR (197 aa).

It belongs to the FapR family.

Its function is as follows. Transcriptional factor involved in regulation of membrane lipid biosynthesis by repressing genes involved in fatty acid and phospholipid metabolism. This chain is Transcription factor FapR, found in Bacillus cereus (strain 03BB102).